A 428-amino-acid polypeptide reads, in one-letter code: Secernin-2 (428 aa).

C10 is a catalytic residue.

Belongs to the peptidase C69 family. Secernin subfamily.

The chain is Secernin-2 (scrn2) from Xenopus laevis (African clawed frog).